Consider the following 53-residue polypeptide: uncharacterized protein (53 aa).

It belongs to the ycf15 family.

It is found in the plastid. It localises to the chloroplast. This is an uncharacterized protein from Helianthus annuus (Common sunflower).